The chain runs to 296 residues: MSDEQIKLVIVTGMSGAGKTVAIQSFEDLGYFTIDNMPPTLVPKFLELAAQSGDTSKIAMVVDMRSRLFFREINSILDSLEINDNINFKILFLDATDTELVSRYKETRRSHPLAADGRVLDGISLERELLAPLKSMSQNVVDTSELTPRQLRKVISKEFSNQDSQSSFRIEVMSFGFKYGIPLDADLVFDVRFLPNPYYKPELRDKTGLDTEVYDYVMSFDESDDFYDHLLALIKPILPGYQNEGKSVLTVAIGCTGGQHRSTAFAHRLSEDLKADWTVNESHRDKNKRKETVNRS.

13 to 20 (GMSGAGKT) is an ATP binding site. A GTP-binding site is contributed by 63-66 (DMRS).

It belongs to the RapZ-like family.

Its function is as follows. Displays ATPase and GTPase activities. The protein is Nucleotide-binding protein SAG0531 of Streptococcus agalactiae serotype V (strain ATCC BAA-611 / 2603 V/R).